The primary structure comprises 154 residues: OCIA domain-containing protein 2 (154 aa).

One can recognise an OCIA domain in the interval 1 to 120 (MASVSTHGNQ…HSFEDQLRGA (120 aa)). At Lys41 the chain carries N6-acetyllysine.

Interacts (via OCIA domain) with OCIAD1/ASRIJ and STAT3. Abundant in kidney, liver and brain.

The protein localises to the endosome. Its subcellular location is the mitochondrion. It is found in the mitochondrion inner membrane. In terms of biological role, has an essential role in the assembly of mitochondrial respiratory chain complex III. Is also required for STAT3 activation and plays a role in cell migration. This chain is OCIA domain-containing protein 2 (Ociad2), found in Mus musculus (Mouse).